We begin with the raw amino-acid sequence, 493 residues long: BICD family-like cargo adapter 2 (493 aa).

Coiled coils occupy residues 56–275 (ELGK…ELHM) and 365–431 (MQHV…LLST).

Belongs to the BICDR family.

The polypeptide is BICD family-like cargo adapter 2 (bicdl2) (Xenopus laevis (African clawed frog)).